A 1073-amino-acid chain; its full sequence is Lon protease homolog, mitochondrial (1073 aa).

Residues M1–N27 constitute a mitochondrion transit peptide. Basic and acidic residues-rich tracts occupy residues F69–I107 and Y113–P123. Residues F69–A173 are disordered. Positions S132–N150 are enriched in low complexity. Positions D158 to F167 are enriched in basic and acidic residues. The Lon N-terminal domain maps to P177–A395. Residue G543 to T550 coordinates ATP. Residues S775–A785 show a composition bias toward basic and acidic residues. A disordered region spans residues S775–I821. Residues I790 to T805 show a composition bias toward polar residues. Over residues E806–I821 the composition is skewed to basic and acidic residues. The Lon proteolytic domain maps to T856–G1044. Residues S950 and K993 contribute to the active site.

The protein belongs to the peptidase S16 family. As to quaternary structure, homohexamer or homoheptamer. Organized in a ring with a central cavity.

Its subcellular location is the mitochondrion matrix. It catalyses the reaction Hydrolysis of proteins in presence of ATP.. Functionally, ATP-dependent serine protease that mediates the selective degradation of misfolded, unassembled or oxidatively damaged polypeptides as well as certain short-lived regulatory proteins in the mitochondrial matrix. May also have a chaperone function in the assembly of inner membrane protein complexes. Participates in the regulation of mitochondrial gene expression and in the maintenance of the integrity of the mitochondrial genome. Binds to mitochondrial DNA in a site-specific manner. In Candida dubliniensis (strain CD36 / ATCC MYA-646 / CBS 7987 / NCPF 3949 / NRRL Y-17841) (Yeast), this protein is Lon protease homolog, mitochondrial.